A 424-amino-acid polypeptide reads, in one-letter code: UPF0597 protein SO_1403 (424 aa).

The protein belongs to the UPF0597 family.

The polypeptide is UPF0597 protein SO_1403 (Shewanella oneidensis (strain ATCC 700550 / JCM 31522 / CIP 106686 / LMG 19005 / NCIMB 14063 / MR-1)).